A 296-amino-acid polypeptide reads, in one-letter code: Protoheme IX farnesyltransferase (296 aa).

Over 1–9 (MMFKQYLQV) the chain is Cytoplasmic. Residues 10-28 (TKPGIIFGNLISVIGGFLL) traverse the membrane as a helical segment. Residues 29 to 37 (ASKGSIDYP) lie on the Periplasmic side of the membrane. The chain crosses the membrane as a helical span at residues 38 to 56 (LFIYTLVGVSLVVASGCVF). At 57–78 (NNYIDRDIDRKMERTKNRVLVK) the chain is on the cytoplasmic side. Residues 79-97 (GLISPGVSLVYATLLGIAG) form a helical membrane-spanning segment. At 98 to 107 (FMLLWFGANP) the chain is on the periplasmic side. A helical transmembrane segment spans residues 108–126 (LACWLGVMGFVVYVGVYSL). At 127 to 197 (YMKRHSVYGT…YQAANIPVLP (71 aa)) the chain is on the cytoplasmic side. Residues 198 to 216 (VIKGISVAKNHITLYIIAF) form a helical membrane-spanning segment. The Periplasmic segment spans residues 217 to 228 (AVATLMLTLGGY). A helical membrane pass occupies residues 229–247 (AGYKYLVVAAAVSVWWLGM). At 248 to 268 (ALRGYKVEDDKVWARKLFGFS) the chain is on the cytoplasmic side. The chain crosses the membrane as a helical span at residues 269-287 (IIAITALSIMMSVDFMVPN). The Periplasmic segment spans residues 288–296 (SQNLLTYVW).

This sequence belongs to the UbiA prenyltransferase family. Protoheme IX farnesyltransferase subfamily.

The protein localises to the cell inner membrane. The enzyme catalyses heme b + (2E,6E)-farnesyl diphosphate + H2O = Fe(II)-heme o + diphosphate. The protein operates within porphyrin-containing compound metabolism; heme O biosynthesis; heme O from protoheme: step 1/1. In terms of biological role, converts heme B (protoheme IX) to heme O by substitution of the vinyl group on carbon 2 of heme B porphyrin ring with a hydroxyethyl farnesyl side group. In Salmonella typhi, this protein is Protoheme IX farnesyltransferase.